The primary structure comprises 541 residues: Arginine--tRNA ligase (541 aa).

The short motif at 119–129 (ANPTGPLHIGH) is the 'HIGH' region element.

The protein belongs to the class-I aminoacyl-tRNA synthetase family. Monomer.

It localises to the cytoplasm. The enzyme catalyses tRNA(Arg) + L-arginine + ATP = L-arginyl-tRNA(Arg) + AMP + diphosphate. In Helicobacter pylori (strain P12), this protein is Arginine--tRNA ligase.